Consider the following 115-residue polypeptide: Macrophage migration inhibitory factor (115 aa).

Pro-2 functions as the Proton acceptor; via imino nitrogen in the catalytic mechanism. Residues Lys-33 and Ile-65 each coordinate substrate. Lys-78 is modified (N6-acetyllysine; alternate). Lys-78 is subject to N6-succinyllysine; alternate. Asn-98 contributes to the substrate binding site.

Belongs to the MIF family. In terms of assembly, homotrimer. Interacts with CD74 and CXCR2 extracellular domain and COPS5. Interacts with the USO1 and BNIPL.

The protein resides in the secreted. Its subcellular location is the cytoplasm. It carries out the reaction 3-phenylpyruvate = enol-phenylpyruvate. It catalyses the reaction L-dopachrome = 5,6-dihydroxyindole-2-carboxylate. Pro-inflammatory cytokine involved in the innate immune response to bacterial pathogens. The expression of MIF at sites of inflammation suggests a role as mediator in regulating the function of macrophages in host defense. Counteracts the anti-inflammatory activity of glucocorticoids. Has phenylpyruvate tautomerase and dopachrome tautomerase activity (in vitro), but the physiological substrate is not known. It is not clear whether the tautomerase activity has any physiological relevance, and whether it is important for cytokine activity. The protein is Macrophage migration inhibitory factor of Mus musculus (Mouse).